We begin with the raw amino-acid sequence, 441 residues long: Fibroleukin (441 aa).

The first 15 residues, 1–15 (MKLANWCWLSSTVLA), serve as a signal peptide directing secretion. Residue N25 is glycosylated (N-linked (GlcNAc...) asparagine). A coiled-coil region spans residues 73–167 (SRIEEVFKEV…LEKLNLVNMN (95 aa)). A disordered region spans residues 102 to 128 (QADDSRDPGRNGLLLPGTGAPGETGDN). Residues N179, N237, N265, and N338 are each glycosylated (N-linked (GlcNAc...) asparagine). The Fibrinogen C-terminal domain occupies 206-438 (VQQHLIYKDC…EVKMMIRPKH (233 aa)).

Homotetramer; disulfide-linked.

Its subcellular location is the secreted. In terms of biological role, may play a role in physiologic lymphocyte functions at mucosal sites. This chain is Fibroleukin (FGL2), found in Bos taurus (Bovine).